Reading from the N-terminus, the 246-residue chain is Triosephosphate isomerase (246 aa).

9-11 is a binding site for substrate; it reads NWK. Residue H99 is the Electrophile of the active site. E168 serves as the catalytic Proton acceptor. Residues G174, S207, and 228-229 each bind substrate; that span reads GG.

Belongs to the triosephosphate isomerase family. In terms of assembly, homodimer.

Its subcellular location is the cytoplasm. The catalysed reaction is D-glyceraldehyde 3-phosphate = dihydroxyacetone phosphate. The protein operates within carbohydrate biosynthesis; gluconeogenesis. It participates in carbohydrate degradation; glycolysis; D-glyceraldehyde 3-phosphate from glycerone phosphate: step 1/1. Its function is as follows. Involved in the gluconeogenesis. Catalyzes stereospecifically the conversion of dihydroxyacetone phosphate (DHAP) to D-glyceraldehyde-3-phosphate (G3P). This chain is Triosephosphate isomerase, found in Prochlorococcus marinus (strain NATL2A).